A 170-amino-acid polypeptide reads, in one-letter code: Adenine phosphoribosyltransferase (170 aa).

This sequence belongs to the purine/pyrimidine phosphoribosyltransferase family. In terms of assembly, homodimer.

It localises to the cytoplasm. The enzyme catalyses AMP + diphosphate = 5-phospho-alpha-D-ribose 1-diphosphate + adenine. It functions in the pathway purine metabolism; AMP biosynthesis via salvage pathway; AMP from adenine: step 1/1. Its function is as follows. Catalyzes a salvage reaction resulting in the formation of AMP, that is energically less costly than de novo synthesis. The sequence is that of Adenine phosphoribosyltransferase from Kosmotoga olearia (strain ATCC BAA-1733 / DSM 21960 / TBF 19.5.1).